The sequence spans 123 residues: Small ribosomal subunit protein uS12 (123 aa).

Position 89 is a 3-methylthioaspartic acid (aspartate 89). A disordered region spans residues 101-123 (SLDTSGVKDRKQGRSKYGAKRPK). Basic residues predominate over residues 113-123 (GRSKYGAKRPK).

Belongs to the universal ribosomal protein uS12 family. In terms of assembly, part of the 30S ribosomal subunit. Contacts proteins S8 and S17. May interact with IF1 in the 30S initiation complex.

With S4 and S5 plays an important role in translational accuracy. Functionally, interacts with and stabilizes bases of the 16S rRNA that are involved in tRNA selection in the A site and with the mRNA backbone. Located at the interface of the 30S and 50S subunits, it traverses the body of the 30S subunit contacting proteins on the other side and probably holding the rRNA structure together. The combined cluster of proteins S8, S12 and S17 appears to hold together the shoulder and platform of the 30S subunit. This chain is Small ribosomal subunit protein uS12, found in Stutzerimonas stutzeri (strain A1501) (Pseudomonas stutzeri).